The following is a 281-amino-acid chain: MSTSAASLCCSSTQVNGFGLRPERSLLYQPTSFSFSRRRTHGIVKASSRVDRFSKSDIIVSPSILSANFAKLGEQVKAVELAGCDWIHVDVMDGRFVPNITIGPLVVDALRPVTDLPLDVHLMIVEPEQRVPDFIKAGADIVSVHCEQQSTIHLHRTVNQIKSLGAKAGVVLNPGTPLSAIEYVLDMVDLVLIMSVNPGFGGQSFIESQVKKISDLRKMCAEKGVNPWIEVDGGVTPANAYKVIEAGANALVAGSAVFGAKDYAEAIKGIKASKRPAAVAV.

A chloroplast-targeting transit peptide spans 1–45 (MSTSAASLCCSSTQVNGFGLRPERSLLYQPTSFSFSRRRTHGIVK). Serine 63 lines the substrate pocket. Histidine 88, aspartate 90, and histidine 121 together coordinate a divalent metal cation. Catalysis depends on aspartate 90, which acts as the Proton acceptor. Residues histidine 121, 199–202 (GFGG), 232–234 (DGG), and 254–256 (GSA) contribute to the substrate site. Aspartate 232 is an a divalent metal cation binding site. Residue aspartate 232 is the Proton donor of the active site.

It belongs to the ribulose-phosphate 3-epimerase family. Homooctamer. The cofactor is Co(2+). Requires Fe(2+) as cofactor. Mn(2+) serves as cofactor. It depends on Zn(2+) as a cofactor. In terms of tissue distribution, present in roots, seeds and flowers. Accumulates in nematode feeding sites (NFS).

The protein resides in the plastid. The protein localises to the chloroplast thylakoid membrane. The catalysed reaction is D-ribulose 5-phosphate = D-xylulose 5-phosphate. It participates in carbohydrate biosynthesis; Calvin cycle. In terms of biological role, essential protein required during embryogenesis. Catalyzes the reversible epimerization of D-ribulose 5-phosphate to D-xylulose 5-phosphate. Essential for the early steps of nematode feeding sites (NFS, multinucleated root cells) formation induced by the root-knot nematodes Heterodera schachtii, Meloidogyne incognita, M.javanica and M.hapla. This Arabidopsis thaliana (Mouse-ear cress) protein is Ribulose-5-phosphate-3-epimerase, chloroplastic.